Reading from the N-terminus, the 506-residue chain is MSQQTAITPTRAQDFPEWYQQVIKAADMAENSEVRGCMVIKPWGYAIWELIQKDLDQRFKDTGHTNAYFPLLIPISYLEKEAEHAEGFATECAVVTHHRLEAQKDEATGKTRMIPTGELTEPFVIRPTSETVIGAAFARWTSSYRDLPLKVNQWCNVMRWEMRPRIFLRTAEFLWQEGHTAHETREEAIEETLTMHKVYEEFQRDVLAIPTIPGEKTEAERFPGAEQTYTVEAMVQDRKAIQAGTSHFLGQNFSKSQNICFAGRDNTQQFAWTSSWGVSTRMIGALIMMHSDDDGLVCPPRVAPQQIVIIPVTPKEESRQAVLDHCEELARTLRAKTFHGQPLRVLVDRRDLGGGAKKWEWVKKGVPVRLEIGPRDLEKGSVCLQRRDRPANEKSFVPETELIDTAADILQSIQDTLLQRAIAFRDSHIRPASTLRELEENFSGEGDADWLQVPWDGSPEEEEELAKRLRISIRCIPLGELGRGEPAPCILTGRMTKRRVLWARSY.

Belongs to the class-II aminoacyl-tRNA synthetase family. ProS type 3 subfamily. In terms of assembly, homodimer.

It localises to the cytoplasm. The catalysed reaction is tRNA(Pro) + L-proline + ATP = L-prolyl-tRNA(Pro) + AMP + diphosphate. Catalyzes the attachment of proline to tRNA(Pro) in a two-step reaction: proline is first activated by ATP to form Pro-AMP and then transferred to the acceptor end of tRNA(Pro). The sequence is that of Proline--tRNA ligase from Akkermansia muciniphila (strain ATCC BAA-835 / DSM 22959 / JCM 33894 / BCRC 81048 / CCUG 64013 / CIP 107961 / Muc).